Reading from the N-terminus, the 142-residue chain is Large ribosomal subunit protein uL11 (142 aa).

The protein belongs to the universal ribosomal protein uL11 family. Part of the ribosomal stalk of the 50S ribosomal subunit. Interacts with L10 and the large rRNA to form the base of the stalk. L10 forms an elongated spine to which L12 dimers bind in a sequential fashion forming a multimeric L10(L12)X complex. In terms of processing, one or more lysine residues are methylated.

Forms part of the ribosomal stalk which helps the ribosome interact with GTP-bound translation factors. In Aliivibrio fischeri (strain MJ11) (Vibrio fischeri), this protein is Large ribosomal subunit protein uL11.